The following is a 476-amino-acid chain: Adenosylhomocysteinase (476 aa).

Residues T67, D142, and E202 each contribute to the substrate site. An NAD(+)-binding site is contributed by 203 to 205 (TTT). Substrate-binding residues include K232 and D236. NAD(+) is bound by residues N237, 266–271 (GYGDVG), E289, N324, 345–347 (IGH), and N390.

It belongs to the adenosylhomocysteinase family. NAD(+) serves as cofactor.

The protein resides in the cytoplasm. The catalysed reaction is S-adenosyl-L-homocysteine + H2O = L-homocysteine + adenosine. It participates in amino-acid biosynthesis; L-homocysteine biosynthesis; L-homocysteine from S-adenosyl-L-homocysteine: step 1/1. Functionally, may play a key role in the regulation of the intracellular concentration of adenosylhomocysteine. The chain is Adenosylhomocysteinase from Prochlorococcus marinus (strain SARG / CCMP1375 / SS120).